The following is a 321-amino-acid chain: Peptidase 1 (321 aa).

The signal sequence occupies residues 1 to 18 (MKFVLAIASLLVLSTVYA). A propeptide spans 19–98 (RPASIKTFEE…LKTQFDLNAE (80 aa)) (activation peptide). 3 disulfide bridges follow: C102/C216, C130/C170, and C164/C202. C133 is a catalytic residue. Residue N151 is glycosylated (N-linked (GlcNAc...) asparagine). Catalysis depends on residues H269 and R288.

This sequence belongs to the peptidase C1 family. In terms of assembly, monomer.

It is found in the secreted. The enzyme catalyses Broad endopeptidase specificity.. Its function is as follows. Thiol protease that hydrolyzes proteins, with a preference for Phe or basic residues. The sequence is that of Peptidase 1 (DERF1) from Dermatophagoides farinae (American house dust mite).